We begin with the raw amino-acid sequence, 414 residues long: Histidine--tRNA ligase (414 aa).

It belongs to the class-II aminoacyl-tRNA synthetase family. Homodimer.

It is found in the cytoplasm. It catalyses the reaction tRNA(His) + L-histidine + ATP = L-histidyl-tRNA(His) + AMP + diphosphate + H(+). The protein is Histidine--tRNA ligase (hisS) of Mycoplasma genitalium (strain ATCC 33530 / DSM 19775 / NCTC 10195 / G37) (Mycoplasmoides genitalium).